The following is an 82-amino-acid chain: Small ribosomal subunit protein bTHXm (82 aa).

Residues 1-22 constitute a mitochondrion transit peptide; it reads MAMRLAAAAAFVRRLVPARNPV. The disordered stretch occupies residues 34–56; that stretch reads RGDKKTKRGKRFKGSYGNARPKR. The span at 37–46 shows a compositional bias: basic residues; that stretch reads KKTKRGKRFK.

This sequence belongs to the bacterial ribosomal protein bTHX family.

The protein localises to the mitochondrion. The polypeptide is Small ribosomal subunit protein bTHXm (Oryza sativa subsp. japonica (Rice)).